The following is a 733-amino-acid chain: Fibronectin type III domain-containing protein 7 (733 aa).

The first 25 residues, 1 to 25, serve as a signal peptide directing secretion; sequence MAGGRETCLPLIGFILICLKMVASA. Fibronectin type-III domains follow at residues 28 to 115, 116 to 202, 203 to 288, 289 to 373, 374 to 459, 460 to 544, 545 to 632, and 631 to 715; these read APEI…TVLA, APIL…TSPR, APAN…TVAC, APGR…TAPC, CPSD…TAPC, SPEI…TVPC, CPTG…CCPL, and PLGV…YSVT. Asn230 is a glycosylation site (N-linked (GlcNAc...) asparagine). The N-linked (GlcNAc...) asparagine glycan is linked to Asn433.

Its subcellular location is the secreted. This Homo sapiens (Human) protein is Fibronectin type III domain-containing protein 7 (FNDC7).